The sequence spans 724 residues: Semaphorin-2A (724 aa).

A signal peptide spans 1 to 25; the sequence is MSLLQLSPLLALLLLLCSSVSETAA. The Sema domain maps to 45-522; the sequence is QGNNNYGKHG…TDHRIKQIDL (478 aa). The N-linked (GlcNAc...) asparagine glycan is linked to N95. Residues C118 and C129 are joined by a disulfide bond. 4 N-linked (GlcNAc...) asparagine glycosylation sites follow: N163, N190, N229, and N314. 2 cysteine pairs are disulfide-bonded: C291–C399 and C315–C358. An N-linked (GlcNAc...) asparagine glycan is attached at N401. 2 disulfides stabilise this stretch: C525–C541 and C535–C550. One can recognise an Ig-like C2-type domain in the interval 552–663; the sequence is PYELDLLQDV…LCSYNITVDA (112 aa). N-linked (GlcNAc...) asparagine glycosylation occurs at N563. The cysteines at positions 590 and 647 are disulfide-linked. N-linked (GlcNAc...) asparagine glycans are attached at residues N658, N670, and N708.

Belongs to the semaphorin family. Interacts with PlexB. In terms of tissue distribution, transiently expressed by a single large muscle during motoneuron outgrowth and synapse formation.

It is found in the secreted. Functionally, ligand for transmembrane receptor PlexB. Plays a role in growth cone guidance. Required for both proper adult behavior and survival. Can function as a selective target-derived signal that inhibits the formation of specific synaptic terminal arbors. Function in neurons is essential for adult survival, motor neuron survival, and is important for climbing behavior and activity. During embryogenesis, plays an important role in correct salivary gland positioning. This is Semaphorin-2A from Drosophila melanogaster (Fruit fly).